A 411-amino-acid chain; its full sequence is S-adenosylmethionine synthase (411 aa).

Residue His15 coordinates ATP. Asp17 provides a ligand contact to Mg(2+). A K(+)-binding site is contributed by Glu43. 2 residues coordinate L-methionine: Glu56 and Gln99. The interval 99-109 (QSPDIAQGVDT) is flexible loop. Residues 174–176 (DGK), 247–248 (RF), Asp256, 262–263 (RK), Ala279, and Lys283 each bind ATP. L-methionine is bound at residue Asp256. Residue Lys287 participates in L-methionine binding.

The protein belongs to the AdoMet synthase family. As to quaternary structure, homotetramer; dimer of dimers. The cofactor is Mg(2+). K(+) is required as a cofactor.

The protein localises to the cytoplasm. It catalyses the reaction L-methionine + ATP + H2O = S-adenosyl-L-methionine + phosphate + diphosphate. The protein operates within amino-acid biosynthesis; S-adenosyl-L-methionine biosynthesis; S-adenosyl-L-methionine from L-methionine: step 1/1. Functionally, catalyzes the formation of S-adenosylmethionine (AdoMet) from methionine and ATP. The overall synthetic reaction is composed of two sequential steps, AdoMet formation and the subsequent tripolyphosphate hydrolysis which occurs prior to release of AdoMet from the enzyme. This chain is S-adenosylmethionine synthase, found in Streptomyces spectabilis.